Reading from the N-terminus, the 275-residue chain is Large ribosomal subunit protein uL2 (275 aa).

The disordered stretch occupies residues 225 to 275; it reads MNPVDHPHGGGEGRSPIGRPPVTPWGKPALGTRTRNKKKASSKLIVKRRTK. Residues 258–275 are compositionally biased toward basic residues; sequence TRNKKKASSKLIVKRRTK.

Belongs to the universal ribosomal protein uL2 family. As to quaternary structure, part of the 50S ribosomal subunit. Forms a bridge to the 30S subunit in the 70S ribosome.

One of the primary rRNA binding proteins. Required for association of the 30S and 50S subunits to form the 70S ribosome, for tRNA binding and peptide bond formation. It has been suggested to have peptidyltransferase activity; this is somewhat controversial. Makes several contacts with the 16S rRNA in the 70S ribosome. The polypeptide is Large ribosomal subunit protein uL2 (Desulforudis audaxviator (strain MP104C)).